A 286-amino-acid polypeptide reads, in one-letter code: Polyamine aminopropyltransferase (286 aa).

The PABS domain maps to 1–235 (MSDYQETLYE…GAMTFAWGAT (235 aa)). Residue Gln-30 coordinates S-methyl-5'-thioadenosine. Residues His-61 and Asp-85 each coordinate spermidine. S-methyl-5'-thioadenosine is bound by residues Glu-105 and 137-138 (DG). The active-site Proton acceptor is Asp-155. 155–158 (DSTD) lines the spermidine pocket. Pro-162 lines the S-methyl-5'-thioadenosine pocket.

The protein belongs to the spermidine/spermine synthase family. As to quaternary structure, homodimer or homotetramer.

The protein localises to the cytoplasm. It catalyses the reaction S-adenosyl 3-(methylsulfanyl)propylamine + putrescine = S-methyl-5'-thioadenosine + spermidine + H(+). The protein operates within amine and polyamine biosynthesis; spermidine biosynthesis; spermidine from putrescine: step 1/1. In terms of biological role, catalyzes the irreversible transfer of a propylamine group from the amino donor S-adenosylmethioninamine (decarboxy-AdoMet) to putrescine (1,4-diaminobutane) to yield spermidine. The protein is Polyamine aminopropyltransferase of Pseudomonas syringae pv. tomato (strain ATCC BAA-871 / DC3000).